We begin with the raw amino-acid sequence, 302 residues long: Lysosomal thioesterase PPT2 (302 aa).

A signal peptide spans 1 to 27; it reads MPGLWRQRLPSAWALLLLPFLPLLLPA. Asn-60 is a glycosylation site (N-linked (GlcNAc...) asparagine). Disulfide bonds link Cys-109–Cys-117 and Cys-165–Cys-176. Ser-111 serves as the catalytic Nucleophile. N-linked (GlcNAc...) asparagine glycans are attached at residues Asn-190 and Asn-206. Asp-228 is a catalytic residue. N-linked (GlcNAc...) asparagine glycosylation is present at Asn-245. Residues Cys-276 and Cys-296 are joined by a disulfide bond. Residue His-283 is part of the active site. Asn-289 carries N-linked (GlcNAc...) asparagine glycosylation.

Belongs to the palmitoyl-protein thioesterase family.

It localises to the lysosome. It carries out the reaction hexadecanoyl-CoA + H2O = hexadecanoate + CoA + H(+). The catalysed reaction is S-hexadecanoyl-N-acetylcysteamine + H2O = N-acetylcysteamine + hexadecanoate + H(+). Catalyzes the cleavage of thioester bonds from S-palmitoyl-CoA or S-palmitoyl-N-acetylcysteamine (unbranched structures) but does not have activity against palmitoylcysteine or palmitoylated proteins, branched structures or bulky head groups. Conversely, hydrolyzes both long and short chain fatty acyl-CoA substrate. This is Lysosomal thioesterase PPT2 (Ppt2) from Rattus norvegicus (Rat).